Consider the following 556-residue polypeptide: Arginine--tRNA ligase (556 aa).

The 'HIGH' region signature appears at 134–144 (ANPTGPLHIGH).

The protein belongs to the class-I aminoacyl-tRNA synthetase family. As to quaternary structure, monomer.

It localises to the cytoplasm. The catalysed reaction is tRNA(Arg) + L-arginine + ATP = L-arginyl-tRNA(Arg) + AMP + diphosphate. The protein is Arginine--tRNA ligase of Micrococcus luteus (strain ATCC 4698 / DSM 20030 / JCM 1464 / CCM 169 / CCUG 5858 / IAM 1056 / NBRC 3333 / NCIMB 9278 / NCTC 2665 / VKM Ac-2230) (Micrococcus lysodeikticus).